The following is a 193-amino-acid chain: Probable thymidylate kinase (193 aa).

7–14 (GIDGSGKT) provides a ligand contact to ATP.

This sequence belongs to the thymidylate kinase family.

The enzyme catalyses dTMP + ATP = dTDP + ADP. In Pyrobaculum calidifontis (strain DSM 21063 / JCM 11548 / VA1), this protein is Probable thymidylate kinase.